The sequence spans 292 residues: Phosphatidylglycerol--prolipoprotein diacylglyceryl transferase (292 aa).

A run of 4 helical transmembrane segments spans residues 7–27 (IILSVVIILAVGIGLFFFLRE), 45–65 (FQLRWYSICIASGILVAYVLA), 83–103 (LFWGIVAGILGARIYYVIFNW), and 116–136 (IWHGGLAIHGGIFGALLMIFI). Arginine 165 is a binding site for a 1,2-diacyl-sn-glycero-3-phospho-(1'-sn-glycerol). A run of 2 helical transmembrane segments spans residues 204 to 224 (PTFLYESLWDITIFVFLYFFV) and 264 to 284 (AAQVVSIILIFIGAAWYAYII).

This sequence belongs to the Lgt family.

The protein localises to the cell inner membrane. The catalysed reaction is L-cysteinyl-[prolipoprotein] + a 1,2-diacyl-sn-glycero-3-phospho-(1'-sn-glycerol) = an S-1,2-diacyl-sn-glyceryl-L-cysteinyl-[prolipoprotein] + sn-glycerol 1-phosphate + H(+). The protein operates within protein modification; lipoprotein biosynthesis (diacylglyceryl transfer). Its function is as follows. Catalyzes the transfer of the diacylglyceryl group from phosphatidylglycerol to the sulfhydryl group of the N-terminal cysteine of a prolipoprotein, the first step in the formation of mature lipoproteins. The polypeptide is Phosphatidylglycerol--prolipoprotein diacylglyceryl transferase (Fervidobacterium nodosum (strain ATCC 35602 / DSM 5306 / Rt17-B1)).